Consider the following 419-residue polypeptide: UDP-N-acetylglucosamine 1-carboxyvinyltransferase (419 aa).

Residue 22 to 23 coordinates phosphoenolpyruvate; that stretch reads KN. A UDP-N-acetyl-alpha-D-glucosamine-binding site is contributed by Arg-91. The active-site Proton donor is Cys-115. Cys-115 is modified (2-(S-cysteinyl)pyruvic acid O-phosphothioketal). UDP-N-acetyl-alpha-D-glucosamine-binding positions include 120–124, 160–163, Asp-305, and Val-327; these read RPVDL and KVSV.

This sequence belongs to the EPSP synthase family. MurA subfamily.

The protein resides in the cytoplasm. It carries out the reaction phosphoenolpyruvate + UDP-N-acetyl-alpha-D-glucosamine = UDP-N-acetyl-3-O-(1-carboxyvinyl)-alpha-D-glucosamine + phosphate. The protein operates within cell wall biogenesis; peptidoglycan biosynthesis. Functionally, cell wall formation. Adds enolpyruvyl to UDP-N-acetylglucosamine. This Shigella sonnei (strain Ss046) protein is UDP-N-acetylglucosamine 1-carboxyvinyltransferase.